The sequence spans 672 residues: Negative growth regulatory protein NGR1 (672 aa).

N-acetylmethionine is present on Met-1. Composition is skewed to polar residues over residues 1–13 and 23–32; these read MMSN…QRQE and SSTVETSTEP. Disordered stretches follow at residues 1–40 and 77–102; these read MMSN…WMGD and SSTS…NSTD. Met-2 carries the post-translational modification N-acetylserine. RRM domains are found at residues 36–159, 192–271, and 360–432; these read LWMG…YSPT, FSLF…YATP, and TTVF…WGRP. Low complexity predominate over residues 77 to 96; that stretch reads SSTSSSNNNTSEENAENQQS. A Phosphoserine modification is found at Ser-524. The disordered stretch occupies residues 640 to 672; that stretch reads LNIAPNSNNSKSSIMNKHPNRNNVPPIHPSLLH. A compositionally biased stretch (low complexity) spans 645–656; sequence NSNNSKSSIMNK.

Its function is as follows. May be an RNA-binding protein involved in control of an RNA processing pathway that influences the regulation of cell growth in early log phase. Can bind to RNA and single-stranded DNA but not double-stranded DNA. This Saccharomyces cerevisiae (strain ATCC 204508 / S288c) (Baker's yeast) protein is Negative growth regulatory protein NGR1 (NGR1).